The sequence spans 211 residues: tRNA (guanine-N(7)-)-methyltransferase (211 aa).

Positions 43, 68, 95, and 117 each coordinate S-adenosyl-L-methionine. The active site involves Asp-117. Substrate is bound by residues Lys-121, Asp-153, and 190–193; that span reads TEYE.

The protein belongs to the class I-like SAM-binding methyltransferase superfamily. TrmB family.

The catalysed reaction is guanosine(46) in tRNA + S-adenosyl-L-methionine = N(7)-methylguanosine(46) in tRNA + S-adenosyl-L-homocysteine. The protein operates within tRNA modification; N(7)-methylguanine-tRNA biosynthesis. In terms of biological role, catalyzes the formation of N(7)-methylguanine at position 46 (m7G46) in tRNA. In Alkaliphilus oremlandii (strain OhILAs) (Clostridium oremlandii (strain OhILAs)), this protein is tRNA (guanine-N(7)-)-methyltransferase.